The following is a 460-amino-acid chain: Cysteine--tRNA ligase (460 aa).

A Zn(2+)-binding site is contributed by Cys28. Positions 30-40 (MTVYDYCHLGH) match the 'HIGH' region motif. Positions 209, 234, and 238 each coordinate Zn(2+). The 'KMSKS' region motif lies at 266–270 (KMSKS). Lys269 is an ATP binding site.

This sequence belongs to the class-I aminoacyl-tRNA synthetase family. In terms of assembly, monomer. Requires Zn(2+) as cofactor.

Its subcellular location is the cytoplasm. The catalysed reaction is tRNA(Cys) + L-cysteine + ATP = L-cysteinyl-tRNA(Cys) + AMP + diphosphate. The chain is Cysteine--tRNA ligase from Pseudomonas fluorescens (strain ATCC BAA-477 / NRRL B-23932 / Pf-5).